A 251-amino-acid chain; its full sequence is Elongator complex protein 6 (251 aa).

The protein belongs to the ELP6 family. Component of the elongator complex composed of Elp1, Elp2, Elp3, Elp4, Elp5 and Elp6. The elongator complex associates with and stabilizes microtubules; efficient interaction requires the full complex. Interacts with InR/Insulin-like receptor; the interaction may stabilize Elp6.

It is found in the cytoplasm. The protein localises to the nucleus. It localises to the cytoskeleton. Its subcellular location is the spindle. The protein operates within tRNA modification; 5-methoxycarbonylmethyl-2-thiouridine-tRNA biosynthesis. Its function is as follows. Component of the elongator complex, which is required for multiple tRNA modifications, including mcm5U (5-methoxycarbonylmethyl uridine), mcm5s2U (5-methoxycarbonylmethyl-2-thiouridine), and ncm5U (5-carbamoylmethyl uridine). The elongator complex catalyzes formation of carboxymethyluridine in the wobble base at position 34 in tRNAs. Binding by the elongator complex stabilizes microtubules and promotes their growth. This induces central spindle asymmetry, promoting polarized signaling endosome trafficking during asymmetric cell division and cell fate assignation of sensory organ precursor cells. Required in germ line cells for microtubule organization involved in oocyte polarization and chromosome organization. Involved in InR-TOR (insulin-like receptor-target of rapamycin) signaling regulation of cellular metabolism, autophagy and apoptosis. The chain is Elongator complex protein 6 from Drosophila melanogaster (Fruit fly).